Here is a 320-residue protein sequence, read N- to C-terminus: Olfactory receptor 2C3 (320 aa).

The Extracellular portion of the chain corresponds to 1 to 26 (MMEIANVSSPEVFVLLGFSTRPSLET). N6 carries an N-linked (GlcNAc...) asparagine glycan. Residues 27–50 (VLFIVVLSFYMVSILGNGIIILVS) form a helical membrane-spanning segment. At 51–58 (HTDVHLHT) the chain is on the cytoplasmic side. Residues 59-80 (PMYFFLANLPFLDMSFTTSIVP) traverse the membrane as a helical segment. The Extracellular segment spans residues 81-101 (QLLANLWGPQKTISYGGCVVQ). C98 and C190 form a disulfide bridge. The helical transmembrane segment at 102–121 (FYISHWLGATECVLLATMSY) threads the bilayer. Residues 122–140 (DRYAAICRPLHYTVIMHPQ) are Cytoplasmic-facing. A helical transmembrane segment spans residues 141–159 (LCLGLALASWLGGLTTSMV). Residues 160–196 (GSTLTMLLPLCGNNCIDHFFCEMPLIMQLACVDTSLN) are Extracellular-facing. Residues 197 to 220 (EMEMYLASFVFVVLPLGLILVSYG) form a helical membrane-spanning segment. Residues 221–237 (HIARAVLKIRSAEGRRK) are Cytoplasmic-facing. A helical transmembrane segment spans residues 238–260 (AFNTCSSHVAVVSLFYGSIIFMY). The Extracellular portion of the chain corresponds to 261-273 (LQPAKSTSHEQGK). A helical transmembrane segment spans residues 274 to 293 (FIALFYTVVTPALNPLIYTL). The Cytoplasmic segment spans residues 294 to 320 (RNTEVKSALRHMVLENCCGSAGKLAQI).

Belongs to the G-protein coupled receptor 1 family.

Its subcellular location is the cell membrane. Its function is as follows. Odorant receptor. The polypeptide is Olfactory receptor 2C3 (OR2C3) (Homo sapiens (Human)).